Reading from the N-terminus, the 369-residue chain is Anhydro-N-acetylmuramic acid kinase (369 aa).

12–19 (GTSMDGVD) lines the ATP pocket.

It belongs to the anhydro-N-acetylmuramic acid kinase family.

The catalysed reaction is 1,6-anhydro-N-acetyl-beta-muramate + ATP + H2O = N-acetyl-D-muramate 6-phosphate + ADP + H(+). Its pathway is amino-sugar metabolism; 1,6-anhydro-N-acetylmuramate degradation. It participates in cell wall biogenesis; peptidoglycan recycling. In terms of biological role, catalyzes the specific phosphorylation of 1,6-anhydro-N-acetylmuramic acid (anhMurNAc) with the simultaneous cleavage of the 1,6-anhydro ring, generating MurNAc-6-P. Is required for the utilization of anhMurNAc either imported from the medium or derived from its own cell wall murein, and thus plays a role in cell wall recycling. This Shewanella loihica (strain ATCC BAA-1088 / PV-4) protein is Anhydro-N-acetylmuramic acid kinase.